A 411-amino-acid chain; its full sequence is ATP phosphoribosyltransferase 1, chloroplastic (411 aa).

The span at 1-12 shows a compositional bias: polar residues; that stretch reads MSLLLPTNLQQY. Positions 1–27 are disordered; that stretch reads MSLLLPTNLQQYPSSSSFPSSTPILSP. A chloroplast-targeting transit peptide spans 1-49; it reads MSLLLPTNLQQYPSSSSFPSSTPILSPPPSTAFSVIVPRRRCLRLVTSC. Residues 13–24 show a composition bias toward low complexity; sequence PSSSSFPSSTPI. V50 is modified (N-acetylvaline).

This sequence belongs to the ATP phosphoribosyltransferase family. Long subfamily. Mg(2+) serves as cofactor. As to expression, expressed in leaves and at lower levels in roots (at protein level).

It is found in the plastid. The protein resides in the chloroplast. The enzyme catalyses 1-(5-phospho-beta-D-ribosyl)-ATP + diphosphate = 5-phospho-alpha-D-ribose 1-diphosphate + ATP. Its pathway is amino-acid biosynthesis; L-histidine biosynthesis; L-histidine from 5-phospho-alpha-D-ribose 1-diphosphate: step 1/9. Its activity is regulated as follows. Feedback inhibited by L-histidine. Its function is as follows. Catalyzes the condensation of ATP and 5-phosphoribose 1-diphosphate to form N'-(5'-phosphoribosyl)-ATP (PR-ATP). This is ATP phosphoribosyltransferase 1, chloroplastic (HISN1A) from Arabidopsis thaliana (Mouse-ear cress).